The chain runs to 371 residues: MSFRKVNIIILVLAVALFLLVLHHNFLSLSSLLRNEVTDSGIVGPQPIDFVPNALRHAVDGRQEEIPVVIAASEDRLGGAIAAINSIQHNTRSNVIFYIVTLNNTADHLRSWLNSDSLKSIRYKIVNFDPKLLEGKVKEDPDQGESMKPLTFARFYLPILVPSAKKAIYMDDDVIVQGDILALYNTALKPGHAAAFSEDCDSASTKVVIRGAGNQYNYIGYLDYKKERIRKLSMKASTCSFNPGVFVANLTEWKRQNITNQLEKWMKLNVEEGLYSRTLAGSITTPPLLIVFYQQHSTIDPMWNVRHLGSSAGKRYSPQFVKAAKLLHWNGHLKPWGRTASYTDVWEKWYIPDPTGKFNLIRRYTEISNIK.

The Cytoplasmic segment spans residues 1–7 (MSFRKVN). The chain crosses the membrane as a helical; Signal-anchor for type II membrane protein span at residues 8-28 (IIILVLAVALFLLVLHHNFLS). Residues 29–371 (LSSLLRNEVT…RRYTEISNIK (343 aa)) are Lumenal-facing. N-linked (GlcNAc...) asparagine glycosylation is found at N249 and N257.

It belongs to the glycosyltransferase 8 family.

It is found in the membrane. This Homo sapiens (Human) protein is Glycosyltransferase 8 domain-containing protein 1 (GLT8D1).